A 60-amino-acid chain; its full sequence is Large ribosomal subunit protein bL32 (60 aa).

Residues 1-60 form a disordered region; the sequence is MAVQQNKKSRSARDMRRSHDALSENALSVEKTTGEVHLRHHVSPEGVYRGRKVVDKGADE. Over residues 11-22 the composition is skewed to basic and acidic residues; the sequence is SARDMRRSHDAL.

Belongs to the bacterial ribosomal protein bL32 family.

This is Large ribosomal subunit protein bL32 from Pseudomonas putida (strain ATCC 700007 / DSM 6899 / JCM 31910 / BCRC 17059 / LMG 24140 / F1).